We begin with the raw amino-acid sequence, 351 residues long: Biotin synthase (351 aa).

Residues 44-262 (NRVQVSTLLS…LAVARILMPQ (219 aa)) enclose the Radical SAM core domain. Residues Cys-59, Cys-63, and Cys-66 each coordinate [4Fe-4S] cluster. Positions 103, 134, 194, and 266 each coordinate [2Fe-2S] cluster.

This sequence belongs to the radical SAM superfamily. Biotin synthase family. Homodimer. [4Fe-4S] cluster is required as a cofactor. [2Fe-2S] cluster serves as cofactor.

It carries out the reaction (4R,5S)-dethiobiotin + (sulfur carrier)-SH + 2 reduced [2Fe-2S]-[ferredoxin] + 2 S-adenosyl-L-methionine = (sulfur carrier)-H + biotin + 2 5'-deoxyadenosine + 2 L-methionine + 2 oxidized [2Fe-2S]-[ferredoxin]. It participates in cofactor biosynthesis; biotin biosynthesis; biotin from 7,8-diaminononanoate: step 2/2. Catalyzes the conversion of dethiobiotin (DTB) to biotin by the insertion of a sulfur atom into dethiobiotin via a radical-based mechanism. This chain is Biotin synthase, found in Pseudomonas fluorescens (strain ATCC BAA-477 / NRRL B-23932 / Pf-5).